We begin with the raw amino-acid sequence, 63 residues long: Small ribosomal subunit protein bS21 (63 aa).

This sequence belongs to the bacterial ribosomal protein bS21 family.

The chain is Small ribosomal subunit protein bS21 from Porphyromonas gingivalis (strain ATCC BAA-308 / W83).